A 245-amino-acid chain; its full sequence is Uroporphyrinogen-III C-methyltransferase (245 aa).

S-adenosyl-L-homocysteine contacts are provided by residues Pro12, 87–89 (GGD), 117–118 (TA), Met168, Ala197, and Ala225.

The protein belongs to the precorrin methyltransferase family.

It carries out the reaction uroporphyrinogen III + 2 S-adenosyl-L-methionine = precorrin-2 + 2 S-adenosyl-L-homocysteine + H(+). The protein operates within cofactor biosynthesis; adenosylcobalamin biosynthesis; precorrin-2 from uroporphyrinogen III: step 1/1. Its pathway is porphyrin-containing compound metabolism; siroheme biosynthesis; precorrin-2 from uroporphyrinogen III: step 1/1. Catalyzes the two successive C-2 and C-7 methylation reactions involved in the conversion of uroporphyrinogen III to precorrin-2 via the intermediate formation of precorrin-1. It is a step in the biosynthesis of both cobalamin (vitamin B12) and siroheme. This Pseudomonas aeruginosa (strain ATCC 15692 / DSM 22644 / CIP 104116 / JCM 14847 / LMG 12228 / 1C / PRS 101 / PAO1) protein is Uroporphyrinogen-III C-methyltransferase (cobA).